The chain runs to 304 residues: N-acetyllactosaminide alpha-2,3-sialyltransferase (304 aa).

CMP-N-acetyl-beta-neuraminate-binding positions include 221–225, 242–243, and 262–263; these read FPHPA, FE, and SS. The Proton donor role is filled by His223.

The protein belongs to the glycosyltransferase 52 family.

It catalyses the reaction a beta-D-galactosyl-(1-&gt;4)-N-acetyl-beta-D-glucosaminyl derivative + CMP-N-acetyl-beta-neuraminate = an N-acetyl-alpha-neuraminyl-(2-&gt;3)-beta-D-galactosyl-(1-&gt;4)-N-acetyl-beta-D-glucosaminyl derivative + CMP + H(+). It functions in the pathway bacterial outer membrane biogenesis; lipooligosaccharide biosynthesis. Functionally, catalyzes the transfer of sialic acid from the substrate CMP-N-acetylneuraminate to the terminal galactose residue of the N-acetyllactosamine moiety of surface lipooligosaccharide (LOS). Thus, functions in the sialylation of LOS, which plays a role in the evasion of the host immune response. This Haemophilus influenzae (strain ATCC 51907 / DSM 11121 / KW20 / Rd) protein is N-acetyllactosaminide alpha-2,3-sialyltransferase.